The primary structure comprises 216 residues: GTP-binding nuclear protein spi1 (216 aa).

The Small GTPase Ran-type domain occupies 6–170 (NVPTFKLVLV…LWLARKLVGN (165 aa)). Residue 17 to 24 (DGGTGKTT) coordinates GTP. At T20 the chain carries Phosphothreonine. Positions 36 to 44 (KKYIATLGV) are switch-I. Residues G67, 121-124 (NKVD), and 149-151 (SAK) each bind GTP. A switch-II region spans residues 67 to 83 (GQEKLGGLRDGYYIQGQ).

It belongs to the small GTPase superfamily. Ran family. In terms of assembly, oligomer of dis3, pim1 and spi1. Found in a nuclear export complex with RanGTP, exportin and pre-miRNA. Interacts with fft3.

The protein resides in the nucleus. Functionally, GTP-binding protein involved in nucleocytoplasmic transport. Required for the import of protein into the nucleus and also for RNA export. The chain is GTP-binding nuclear protein spi1 (spi1) from Schizosaccharomyces pombe (strain 972 / ATCC 24843) (Fission yeast).